The following is a 372-amino-acid chain: Probable dual-specificity RNA methyltransferase RlmN (372 aa).

The Proton acceptor role is filled by E106. The Radical SAM core domain maps to 112–359 (YPQRNTVCIS…SCTVRDTRGR (248 aa)). A disulfide bridge links C119 with C365. The [4Fe-4S] cluster site is built by C126, C130, and C133. Residues 186-187 (GE), S220, 243-245 (SLH), and N322 contribute to the S-adenosyl-L-methionine site. The S-methylcysteine intermediate role is filled by C365.

This sequence belongs to the radical SAM superfamily. RlmN family. [4Fe-4S] cluster serves as cofactor.

The protein localises to the cytoplasm. It catalyses the reaction adenosine(2503) in 23S rRNA + 2 reduced [2Fe-2S]-[ferredoxin] + 2 S-adenosyl-L-methionine = 2-methyladenosine(2503) in 23S rRNA + 5'-deoxyadenosine + L-methionine + 2 oxidized [2Fe-2S]-[ferredoxin] + S-adenosyl-L-homocysteine. It carries out the reaction adenosine(37) in tRNA + 2 reduced [2Fe-2S]-[ferredoxin] + 2 S-adenosyl-L-methionine = 2-methyladenosine(37) in tRNA + 5'-deoxyadenosine + L-methionine + 2 oxidized [2Fe-2S]-[ferredoxin] + S-adenosyl-L-homocysteine. In terms of biological role, specifically methylates position 2 of adenine 2503 in 23S rRNA and position 2 of adenine 37 in tRNAs. This is Probable dual-specificity RNA methyltransferase RlmN from Mycolicibacterium smegmatis (strain ATCC 700084 / mc(2)155) (Mycobacterium smegmatis).